We begin with the raw amino-acid sequence, 130 residues long: MRLANPLTLPPLTLAYLGDALYEAFVRERLLERGYVRVNDLHRHALRYVQATAQAAILHHLMPALTEQEQDVVRRGRNAKGHGAPKSADPAEYAASTGFEALVGYLYLAGQAERLSEVLQAAADFIERGQ.

Aspartate 19 is a catalytic residue. The tract at residues 69–91 (EQDVVRRGRNAKGHGAPKSADPA) is disordered.

Belongs to the MrnC RNase family. Homodimer. It depends on Mg(2+) as a cofactor.

The protein resides in the cytoplasm. Its function is as follows. Involved in correct processing of both the 5' and 3' ends of 23S rRNA precursor. Processes 30S rRNA precursor transcript even in absence of ribonuclease 3 (Rnc); Rnc processes 30S rRNA into smaller rRNA precursors. The protein is Mini-ribonuclease 3 of Symbiobacterium thermophilum (strain DSM 24528 / JCM 14929 / IAM 14863 / T).